The following is a 371-amino-acid chain: Probable tRNA sulfurtransferase (371 aa).

Positions 54-156 constitute a THUMP domain; it reads NANIEALSEV…NEMTYFYHKV (103 aa). ATP-binding positions include 174-175, 199-200, Lys-254, Gly-276, and Gln-285; these read LF and NF.

Belongs to the ThiI family.

The protein localises to the cytoplasm. It carries out the reaction [ThiI sulfur-carrier protein]-S-sulfanyl-L-cysteine + a uridine in tRNA + 2 reduced [2Fe-2S]-[ferredoxin] + ATP + H(+) = [ThiI sulfur-carrier protein]-L-cysteine + a 4-thiouridine in tRNA + 2 oxidized [2Fe-2S]-[ferredoxin] + AMP + diphosphate. It catalyses the reaction [ThiS sulfur-carrier protein]-C-terminal Gly-Gly-AMP + S-sulfanyl-L-cysteinyl-[cysteine desulfurase] + AH2 = [ThiS sulfur-carrier protein]-C-terminal-Gly-aminoethanethioate + L-cysteinyl-[cysteine desulfurase] + A + AMP + 2 H(+). It participates in cofactor biosynthesis; thiamine diphosphate biosynthesis. Its function is as follows. Catalyzes the ATP-dependent transfer of a sulfur to tRNA to produce 4-thiouridine in position 8 of tRNAs, which functions as a near-UV photosensor. Also catalyzes the transfer of sulfur to the sulfur carrier protein ThiS, forming ThiS-thiocarboxylate. This is a step in the synthesis of thiazole, in the thiamine biosynthesis pathway. The sulfur is donated as persulfide by IscS. This is Probable tRNA sulfurtransferase from Saccharolobus solfataricus (strain ATCC 35092 / DSM 1617 / JCM 11322 / P2) (Sulfolobus solfataricus).